A 395-amino-acid chain; its full sequence is Multidrug resistance protein MdtL (395 aa).

12 consecutive transmembrane segments (helical) span residues 4 to 24 (FLLC…MYLV), 42 to 62 (IAFS…GKIA), 69 to 89 (PVAI…SRAS), 93 to 113 (LFLS…VVAF), 131 to 151 (LLNG…HLIM), 158 to 178 (SLFY…LFIL), 217 to 237 (VSVI…VMGF), 247 to 267 (ALTA…LGLF), 271 to 291 (TLML…SLAH), 295 to 315 (VTLF…GVAM), 333 to 353 (LGIA…ILGI), and 358 to 378 (MLIG…FSVA).

This sequence belongs to the major facilitator superfamily. DHA1 family. MdtL (TC 2.A.1.2.22) subfamily.

It localises to the cell inner membrane. This Salmonella heidelberg (strain SL476) protein is Multidrug resistance protein MdtL.